A 263-amino-acid polypeptide reads, in one-letter code: Tryptophan synthase alpha chain (263 aa).

Catalysis depends on proton acceptor residues Glu-47 and Asp-58.

The protein belongs to the TrpA family. Tetramer of two alpha and two beta chains.

The protein resides in the plastid. It is found in the chloroplast. It carries out the reaction (1S,2R)-1-C-(indol-3-yl)glycerol 3-phosphate + L-serine = D-glyceraldehyde 3-phosphate + L-tryptophan + H2O. The protein operates within amino-acid biosynthesis; L-tryptophan biosynthesis; L-tryptophan from chorismate: step 5/5. Its function is as follows. The alpha subunit is responsible for the aldol cleavage of indoleglycerol phosphate to indole and glyceraldehyde 3-phosphate. This Pyropia yezoensis (Susabi-nori) protein is Tryptophan synthase alpha chain.